The sequence spans 393 residues: Double-stranded RNA-binding protein 5 (393 aa).

DRBM domains lie at 1–70 and 87–155; these read MYKN…VLSS and IYKN…SLKK. Disordered regions lie at residues 220-251 and 335-371; these read ASSSSSTSTPNQHKNSSFISLIPPPPPPKSSK and NPNLNPSSLSSSVNEFTSSNNSCSVLNTPGLGGQEKK. A compositionally biased stretch (polar residues) spans 347 to 361; it reads VNEFTSSNNSCSVLN.

In terms of assembly, heterodimer with DRB1, DRB2 or DRB4. Interacts with DCL1 and DCL3. Expressed in the shoot apical meristem (SAM).

Its function is as follows. Binds double-stranded RNA. May be involved in RNA-mediated silencing. The chain is Double-stranded RNA-binding protein 5 (DRB5) from Arabidopsis thaliana (Mouse-ear cress).